The chain runs to 106 residues: Large ribosomal subunit protein uL24 (106 aa).

Belongs to the universal ribosomal protein uL24 family. Part of the 50S ribosomal subunit.

Its function is as follows. One of two assembly initiator proteins, it binds directly to the 5'-end of the 23S rRNA, where it nucleates assembly of the 50S subunit. Functionally, one of the proteins that surrounds the polypeptide exit tunnel on the outside of the subunit. The protein is Large ribosomal subunit protein uL24 of Acidiphilium cryptum (strain JF-5).